Reading from the N-terminus, the 278-residue chain is MNILDGKSLAKKIKHNIKQEVKHLERKPKLVVVLVGDDQASLVYVKNKVQACADVGFSSQLDMFEKDVEEDVLLNHIKSLNEQEDVDGILVQLPLPSHISMQKVIDTIDPSKDVDGFHPQNMGKLFSGDLENAFIPCTPLGIKLLLDEYNIDLKGKNVCIVGAGFIVGKPLSMLMLNYDATVSVCHKYTKDIVEYTKTADILISATGVPFLIKDYMVKEGAVVIDVGISKVNGKIVGDVDFESISQKASFITPVPGGVGPMTVATLLLNTLKAYKQRI.

NADP(+) is bound by residues 162-164 (GAG) and Ile228.

It belongs to the tetrahydrofolate dehydrogenase/cyclohydrolase family. As to quaternary structure, homodimer.

It carries out the reaction (6R)-5,10-methylene-5,6,7,8-tetrahydrofolate + NADP(+) = (6R)-5,10-methenyltetrahydrofolate + NADPH. The catalysed reaction is (6R)-5,10-methenyltetrahydrofolate + H2O = (6R)-10-formyltetrahydrofolate + H(+). Its pathway is one-carbon metabolism; tetrahydrofolate interconversion. Functionally, catalyzes the oxidation of 5,10-methylenetetrahydrofolate to 5,10-methenyltetrahydrofolate and then the hydrolysis of 5,10-methenyltetrahydrofolate to 10-formyltetrahydrofolate. In Hydrogenobaculum sp. (strain Y04AAS1), this protein is Bifunctional protein FolD.